The chain runs to 462 residues: Gamma-aminobutyric acid receptor subunit alpha-5 (462 aa).

A signal peptide spans 1 to 31 (MDNGMFSGFIMIKNLLLFCISMNLSSHFGFS). Topologically, residues 32 to 260 (QMPTSSVKDE…FHLKRKIGYF (229 aa)) are extracellular. Residue Asn-45 is glycosylated (N-linked (GlcNAc...) asparagine). A 4-aminobutanoate-binding site is contributed by Arg-101. Residue Asn-145 is glycosylated (N-linked (GlcNAc...) asparagine). Thr-164 is a 4-aminobutanoate binding site. A disulfide bridge links Cys-173 with Cys-187. 2 N-linked (GlcNAc...) asparagine glycosylation sites follow: Asn-207 and Asn-236. The helical transmembrane segment at 261 to 281 (VIQTYLPCIMTVILSQVSFWL) threads the bilayer. Topologically, residues 282–286 (NRESV) are cytoplasmic. The chain crosses the membrane as a helical span at residues 287 to 308 (PARTVFGVTTVLTMTTLSISAR). Residues 309–318 (NSLPKVAYAT) lie on the Extracellular side of the membrane. A helical membrane pass occupies residues 319–340 (AMDWFIAVCYAFVFSALIEFAT). Residues 341–427 (VNYFTKRGWA…TYNSISKIDK (87 aa)) are Cytoplasmic-facing. Lys-355 is covalently cross-linked (Glycyl lysine isopeptide (Lys-Gly) (interchain with G-Cter in ubiquitin)). A disordered region spans residues 377–412 (FTTGKMSHPPNIPKEQTPAGTSNTTSVSVKPSEEKT). Residues 428-448 (MSRIVFPVLFGTFNLVYWATY) traverse the membrane as a helical segment. Over 449–462 (LNREPVIKGAASPK) the chain is Extracellular.

This sequence belongs to the ligand-gated ion channel (TC 1.A.9) family. Gamma-aminobutyric acid receptor (TC 1.A.9.5) subfamily. GABRA5 sub-subfamily. In terms of assembly, heteropentamer, formed by a combination of alpha (GABRA1-6), beta (GABRB1-3), gamma (GABRG1-3), delta (GABRD), epsilon (GABRE), rho (GABRR1-3), pi (GABRP) and theta (GABRQ) chains, each subunit exhibiting distinct physiological and pharmacological properties.

It localises to the postsynaptic cell membrane. It is found in the cell membrane. The catalysed reaction is chloride(in) = chloride(out). Alpha subunit of the heteropentameric ligand-gated chloride channel gated by gamma-aminobutyric acid (GABA), a major inhibitory neurotransmitter in the brain. GABA-gated chloride channels, also named GABA(A) receptors (GABAAR), consist of five subunits arranged around a central pore and contain GABA active binding site(s) located at the alpha and beta subunit interface(s). When activated by GABA, GABAARs selectively allow the flow of chloride anions across the cell membrane down their electrochemical gradient. GABAARs containing alpha-5/GABRA5 subunits are mainly extrasynaptic and contribute to the tonic GABAergic inhibition in the hippocampus. Extrasynaptic alpha-5-containing GABAARs in CA1 pyramidal neurons play a role in learning and memory processes. This Homo sapiens (Human) protein is Gamma-aminobutyric acid receptor subunit alpha-5.